The sequence spans 292 residues: 33 kDa chaperonin (292 aa).

Disulfide bonds link Cys-230/Cys-232 and Cys-263/Cys-266.

The protein belongs to the HSP33 family. Post-translationally, under oxidizing conditions two disulfide bonds are formed involving the reactive cysteines. Under reducing conditions zinc is bound to the reactive cysteines and the protein is inactive.

It localises to the cytoplasm. Redox regulated molecular chaperone. Protects both thermally unfolding and oxidatively damaged proteins from irreversible aggregation. Plays an important role in the bacterial defense system toward oxidative stress. This chain is 33 kDa chaperonin, found in Cronobacter sakazakii (strain ATCC BAA-894) (Enterobacter sakazakii).